We begin with the raw amino-acid sequence, 140 residues long: 3-hydroxyacyl-[acyl-carrier-protein] dehydratase FabZ (140 aa).

Residue His-47 is part of the active site.

Belongs to the thioester dehydratase family. FabZ subfamily.

Its subcellular location is the cytoplasm. The enzyme catalyses a (3R)-hydroxyacyl-[ACP] = a (2E)-enoyl-[ACP] + H2O. Its function is as follows. Involved in unsaturated fatty acids biosynthesis. Catalyzes the dehydration of short chain beta-hydroxyacyl-ACPs and long chain saturated and unsaturated beta-hydroxyacyl-ACPs. The chain is 3-hydroxyacyl-[acyl-carrier-protein] dehydratase FabZ from Streptococcus pyogenes serotype M49 (strain NZ131).